We begin with the raw amino-acid sequence, 864 residues long: MSKSAVSPMMQQYLGIKAQHTDKLVFYRMGDFYEMFFDDAVEAAKLLDITLTTRGQVDGEPVKMAGVPFHAAEQYLARLVKLGKSVAICEQVGEVGAGKGPVERKVVRIVTPGTLTDSALLEDKETNRIVAVSPDKKYIGLAWASLQSGEFKTKLTTVDKLDDELARLQAAEILLPDSKNAPQLQTASGVTRLNAWQFAADAGEKLLTEYFGCQDLRGFGLDGKEHAVAIGAAGALLNYIRLTQNLMPQHLDGLSLETDSQYIGMDAATRRNLEITQTLSGKKSPTLMSTLDLCATHMGSRLLALWLHHPLRNRAHIRARQEAVAALESQYKPLQCRLKSIADIERIAARIAVGNARPRDLAALRDSLFALSEIELSAECSSLLGTLKAVFPENLSTAEQLRQAILPEPSVWLKDGNVINHGFHPELDELRRIQNHGDEFLLDLEAKERERTGLSTLKVEFNRVHGFYIELSKTQAEQAPADYQRRQTLKNAERFITPELKAFEDKVLTAQEQALALEKQLFDGVLKNLQTALPQLQKAAKAAAALDVLSTFSALAKERNFVRPEFADYPVIHIENGRHPVVEQQVRHFTANHTDLDHKHRLMLLTGPNMGGKSTYMRQVALIVLLAHTGCFVPADAATIGPIDQIFTRIGASDDLASNRSTFMVEMSETAYILHHATEQSLVLMDEVGRGTSTFDGLALAHAVAEHLLQKNKSFSLFATHYFELTYLPEAHTAAVNMHLSALEQGQDIVFLHQIQPGPAGKSYGIAVAKLAGLPVRALKSAQKHLNGLENQAAANRPQLDIFSTMPSEKGDEPNVGNFVDKAEEKHFEGILAAALEKLDPDSLTPREALSELYRLKDLCKSVS.

ATP is bound at residue 607–614; sequence GPNMGGKS.

The protein belongs to the DNA mismatch repair MutS family.

Functionally, this protein is involved in the repair of mismatches in DNA. It is possible that it carries out the mismatch recognition step. This protein has a weak ATPase activity. In Neisseria meningitidis serogroup B (strain ATCC BAA-335 / MC58), this protein is DNA mismatch repair protein MutS.